Here is a 323-residue protein sequence, read N- to C-terminus: Methenyltetrahydromethanopterin cyclohydrolase (323 aa).

The protein belongs to the MCH family.

It localises to the cytoplasm. The enzyme catalyses 5,10-methenyl-5,6,7,8-tetrahydromethanopterin + H2O = N(5)-formyl-5,6,7,8-tetrahydromethanopterin + H(+). It participates in one-carbon metabolism; methanogenesis from CO(2); 5,10-methenyl-5,6,7,8-tetrahydromethanopterin from CO(2): step 3/3. Functionally, catalyzes the reversible interconversion of 5-formyl-H(4)MPT to methenyl-H(4)MPT(+). The polypeptide is Methenyltetrahydromethanopterin cyclohydrolase (Methanobrevibacter smithii (strain ATCC 35061 / DSM 861 / OCM 144 / PS)).